The chain runs to 294 residues: Probable enoyl-CoA hydratase echA12 (294 aa).

This sequence belongs to the enoyl-CoA hydratase/isomerase family.

The catalysed reaction is a (3S)-3-hydroxyacyl-CoA = a (2E)-enoyl-CoA + H2O. It catalyses the reaction a 4-saturated-(3S)-3-hydroxyacyl-CoA = a (3E)-enoyl-CoA + H2O. In terms of biological role, could possibly oxidize fatty acids using specific components. The sequence is that of Probable enoyl-CoA hydratase echA12 (echA12) from Mycobacterium leprae (strain TN).